Reading from the N-terminus, the 554-residue chain is Membrane protein insertase YidC (554 aa).

The next 5 helical transmembrane spans lie at 7–24, 362–382, 436–456, 475–495, and 510–530; these read VLWV…DNWQ, VVGN…AVFF, LPVV…LASV, PFFI…SLNP, and PIAF…YYVV.

The protein belongs to the OXA1/ALB3/YidC family. Type 1 subfamily. In terms of assembly, interacts with the Sec translocase complex via SecD. Specifically interacts with transmembrane segments of nascent integral membrane proteins during membrane integration.

It localises to the cell inner membrane. Required for the insertion and/or proper folding and/or complex formation of integral membrane proteins into the membrane. Involved in integration of membrane proteins that insert both dependently and independently of the Sec translocase complex, as well as at least some lipoproteins. Aids folding of multispanning membrane proteins. The polypeptide is Membrane protein insertase YidC (Burkholderia vietnamiensis (strain G4 / LMG 22486) (Burkholderia cepacia (strain R1808))).